The primary structure comprises 673 residues: DNA ligase (673 aa).

NAD(+) is bound by residues 33-37 (DHQYD), 83-84 (SL), and Glu117. The N6-AMP-lysine intermediate role is filled by Lys119. Residues Arg140, Glu175, Lys282, and Lys306 each contribute to the NAD(+) site. The Zn(2+) site is built by Cys400, Cys403, Cys418, and Cys424. A BRCT domain is found at 592 to 673 (RGSSAISGKT…WVKMVEDARS (82 aa)).

Belongs to the NAD-dependent DNA ligase family. LigA subfamily. The cofactor is Mg(2+). Requires Mn(2+) as cofactor.

It catalyses the reaction NAD(+) + (deoxyribonucleotide)n-3'-hydroxyl + 5'-phospho-(deoxyribonucleotide)m = (deoxyribonucleotide)n+m + AMP + beta-nicotinamide D-nucleotide.. Its function is as follows. DNA ligase that catalyzes the formation of phosphodiester linkages between 5'-phosphoryl and 3'-hydroxyl groups in double-stranded DNA using NAD as a coenzyme and as the energy source for the reaction. It is essential for DNA replication and repair of damaged DNA. The polypeptide is DNA ligase (Anaplasma marginale (strain Florida)).